Reading from the N-terminus, the 236-residue chain is MGQKINPIGLRLGINRTWDSRWYANTGEYGKLLHEDVKIREFLTEELKQAAISKIVIERPHKKCRVTIHSARPGIIIGKKGADIEKLRKKLSEMTNADTSLNIVEVRKPEVDATLIAQLIAQQLERRVAFRRAMKRAVQSAMRLGAEGIRINCSGRLGGAEIARMEWYREGRVPLHTLRADIDYGTAEAKTAYGICGVKVWVFKGEILEHDPMASERRAVEGDNQGSSSNRRRENA.

The KH type-2 domain maps to 39-107 (IREFLTEELK…DTSLNIVEVR (69 aa)). A disordered region spans residues 214 to 236 (ASERRAVEGDNQGSSSNRRRENA).

Belongs to the universal ribosomal protein uS3 family. In terms of assembly, part of the 30S ribosomal subunit. Forms a tight complex with proteins S10 and S14.

Its function is as follows. Binds the lower part of the 30S subunit head. Binds mRNA in the 70S ribosome, positioning it for translation. The protein is Small ribosomal subunit protein uS3 of Brucella canis (strain ATCC 23365 / NCTC 10854 / RM-666).